The chain runs to 567 residues: WD repeat-containing protein 20 (567 aa).

An N-acetylalanine modification is found at alanine 2. 4 WD repeats span residues 147–187, 216–257, 258–297, and 345–389; these read IDKS…GTTA, VGEG…GTMK, SYFG…VIAR, and STQS…LFPH. 2 positions are modified to phosphoserine: serine 355 and serine 358. Residues 408–441 are disordered; sequence PAGSNGSAVTTPGNSVPPPLPRSNSLPHSAVSNA. Polar residues-rich tracts occupy residues 411 to 421 and 429 to 441; these read SNGSAVTTPGN and RSNS…VSNA. Phosphoserine is present on residues serine 430, serine 432, and serine 463. Residues 468–481 show a composition bias toward basic residues; it reads KERHHEKDRKRNHS. Residues 468-493 form a disordered region; sequence KERHHEKDRKRNHSMGHISSKSSDKL. One copy of the WD 5 repeat lies at 529–566; the sequence is IAHERLTVLVFLEDCIVTACQEGFICTWARPGKVSKFQ.

Interacts with USP12; promotes translocation of USP12/WDR20 to the plasma membrane. Component of the USP12/WDR20/WDR48 deubiquitinating complex. Interacts with USP46; contributes to the cytoplasmic localization of the USP46/WDR20 complex. Component of the USP12/DMWD/WDR48 deubiquitinating complex.

It localises to the cytoplasm. The protein localises to the nucleus. In terms of biological role, regulator of deubiquitinating complexes. Activates deubiquitinating activity of complexes containing USP12. Anchors at the base of the ubiquitin-contacting loop of USP12 and remotely modulates the catalytic center of the enzyme. Regulates shuttling of complexes containing USP12 between the plasma membrane, cytoplasm and nucleus. This is WD repeat-containing protein 20 (Wdr20) from Mus musculus (Mouse).